The chain runs to 257 residues: Neuroendocrine secretory protein 55 (257 aa).

A signal peptide spans 1-46; it reads MDRRSRAQQWRRARHNYNDLCPPIGRRAATALLWLSCSIALLRALA. The disordered stretch occupies residues 61–257; it reads SFLNAHHRSA…RKGPIPIRRH (197 aa). Residues 70–82 show a composition bias toward low complexity; sequence AAAAAAAQVLPES. A compositionally biased stretch (basic and acidic residues) spans 86–103; sequence ESDHEHEEVEPELARPEC. The span at 104 to 139 shows a compositional bias: acidic residues; sequence LEYDQDDYETETDSETEPESDIESETEIETEPETEP. Residues 200-211 are compositionally biased toward basic and acidic residues; it reads EPQRGPLDQDPR. Basic residues predominate over residues 227–237; that stretch reads PRRCKTRRPAR.

This sequence belongs to the NESP55 family. Post-translationally, binds keratan sulfate chains. May be proteolytically processed to give rise to a number of active peptides.

Its subcellular location is the cytoplasmic vesicle. The protein resides in the secretory vesicle. It is found in the secreted. This is Neuroendocrine secretory protein 55 from Mus musculus (Mouse).